The following is a 613-amino-acid chain: V-type proton ATPase catalytic subunit A isoform 2 (613 aa).

240 to 247 (GAFGCGKT) is an ATP binding site.

This sequence belongs to the ATPase alpha/beta chains family. In terms of assembly, V-ATPase is a heteromultimeric enzyme composed of a peripheral catalytic V1 complex (main components: subunits A, B, C, D, E, and F) attached to an integral membrane V0 proton pore complex (main component: the proteolipid protein).

The catalysed reaction is ATP + H2O + 4 H(+)(in) = ADP + phosphate + 5 H(+)(out). Catalytic subunit of the peripheral V1 complex of vacuolar ATPase. V-ATPase vacuolar ATPase is responsible for acidifying a variety of intracellular compartments in eukaryotic cells. This is V-type proton ATPase catalytic subunit A isoform 2 from Acetabularia acetabulum (Mermaid's wine glass).